The primary structure comprises 238 residues: uncharacterized protein (238 aa).

The segment at 219–238 (EESINNNVDDTDDIDNDNFI) is disordered. Acidic residues predominate over residues 227-238 (DDTDDIDNDNFI).

This is an uncharacterized protein from Buchnera aphidicola subsp. Acyrthosiphon pisum (strain APS) (Acyrthosiphon pisum symbiotic bacterium).